We begin with the raw amino-acid sequence, 831 residues long: Leucine--tRNA ligase (831 aa).

The short motif at 36 to 46 (PYPSGKLHIGH) is the 'HIGH' region element. The 'KMSKS' region motif lies at 607-611 (KMSKS). Residue Lys610 coordinates ATP.

Belongs to the class-I aminoacyl-tRNA synthetase family.

The protein resides in the cytoplasm. It carries out the reaction tRNA(Leu) + L-leucine + ATP = L-leucyl-tRNA(Leu) + AMP + diphosphate. The protein is Leucine--tRNA ligase of Neorickettsia sennetsu (strain ATCC VR-367 / Miyayama) (Ehrlichia sennetsu).